The following is a 43-amino-acid chain: S-layer protein 1 (43 aa).

The protein resides in the secreted. It localises to the cell wall. Its subcellular location is the S-layer. The S-layer is a paracrystalline mono-layered assembly of proteins which coat the surface of bacteria. The polypeptide is S-layer protein 1 (Bacillus thuringiensis subsp. konkukian).